We begin with the raw amino-acid sequence, 352 residues long: Alpha-2-HS-glycoprotein (352 aa).

Residues 1–18 form the signal peptide; the sequence is MKSLVLLLCFAQLWSCQS. A Cystatin fetuin-A-type 1 domain is found at 19–133; that stretch reads APQGAGLGFR…QFRVLHAQCH (115 aa). Intrachain disulfides connect Cys-32–Cys-343, Cys-89–Cys-100, Cys-114–Cys-132, Cys-146–Cys-149, Cys-208–Cys-219, and Cys-230–Cys-247. Asn-99 carries an N-linked (GlcNAc...) asparagine glycan. A Phosphoserine modification is found at Ser-134. Residue Thr-135 is modified to Phosphothreonine. Phosphoserine is present on Ser-138. In terms of domain architecture, Cystatin fetuin-A-type 2 spans 144-250; sequence KFCPRCPILI…EEVSVACKLF (107 aa). 2 N-linked (GlcNAc...) asparagine glycosylation sites follow: Asn-156 and Asn-176. Residues 256 to 273 show a composition bias toward low complexity; it reads PANANPAGPAPTVGQAAP. Positions 256 to 280 are disordered; that stretch reads PANANPAGPAPTVGQAAPVAPPAGP. Phosphoserine is present on residues Ser-309, Ser-313, Ser-316, and Ser-318. The segment at 319–338 is disordered; sequence GEVLHSPKVGQPGDAGAAGP. Low complexity predominate over residues 328–338; that stretch reads GQPGDAGAAGP.

This sequence belongs to the fetuin family. In terms of processing, undergoes complex post-translational modification involving N-glycosylation, and addition of fucose and sialic acid residues. Phosphorylation occurs at a serine residue. Post-translationally, phosphorylated by FAM20C in the extracellular medium. In terms of tissue distribution, synthesized in liver and secreted by the hepatocytes in the blood.

Its subcellular location is the secreted. Its function is as follows. Could inhibit both insulin-receptor tyrosine kinase activity and insulin-stimulated receptor autophosphorylation and, concomitantly, antagonize the mitogenic effect of the hormone in cultured rat hepatoma cells. This Rattus norvegicus (Rat) protein is Alpha-2-HS-glycoprotein (Ahsg).